The following is a 461-amino-acid chain: Elongation factor 1-alpha (461 aa).

Glycine 2 carries the post-translational modification N,N,N-trimethylglycine. The tr-type G domain occupies 5 to 242; that stretch reads KIHINIVVIG…DAILPPSRPT (238 aa). Positions 14–21 are G1; that stretch reads GHVDSGKS. 14 to 21 provides a ligand contact to GTP; that stretch reads GHVDSGKS. The segment at 70-74 is G2; sequence GITID. The tract at residues 91-94 is G3; it reads DAPG. Residues 153–156 and 194–196 contribute to the GTP site; these read NKMD and SGW. A G4 region spans residues 153–156; sequence NKMD. Residues 194–196 form a G5 region; the sequence is SGW. A 5-glutamyl glycerylphosphorylethanolamine mark is found at glutamate 301 and glutamate 374.

The protein belongs to the TRAFAC class translation factor GTPase superfamily. Classic translation factor GTPase family. EF-Tu/EF-1A subfamily.

The protein localises to the cytoplasm. The catalysed reaction is GTP + H2O = GDP + phosphate + H(+). Translation elongation factor that catalyzes the GTP-dependent binding of aminoacyl-tRNA (aa-tRNA) to the A-site of ribosomes during the elongation phase of protein synthesis. Base pairing between the mRNA codon and the aa-tRNA anticodon promotes GTP hydrolysis, releasing the aa-tRNA from EEF1A1 and allowing its accommodation into the ribosome. The growing protein chain is subsequently transferred from the P-site peptidyl tRNA to the A-site aa-tRNA, extending it by one amino acid through ribosome-catalyzed peptide bond formation. This Oryzias latipes (Japanese rice fish) protein is Elongation factor 1-alpha (eef1a).